Reading from the N-terminus, the 262-residue chain is uncharacterized protein (262 aa).

A signal peptide spans 1–22 (MMNNSITLLLALLVGLVGFAFT).

This sequence belongs to the IIV-6 117L family.

This is an uncharacterized protein from Aedes vexans (Inland floodwater mosquito).